The primary structure comprises 420 residues: Tyrosine--tRNA ligase (420 aa).

Y39 contacts L-tyrosine. The short motif at 44–53 (CTAPSLHIGS) is the 'HIGH' region element. Residues Y176 and Q180 each contribute to the L-tyrosine site. Positions 236 to 240 (KMGKT) match the 'KMSKS' region motif. K239 lines the ATP pocket. The 66-residue stretch at 349–414 (IPLIDLLYDT…AGKKRHIKIL (66 aa)) folds into the S4 RNA-binding domain.

It belongs to the class-I aminoacyl-tRNA synthetase family. TyrS type 1 subfamily. As to quaternary structure, homodimer.

Its subcellular location is the cytoplasm. It carries out the reaction tRNA(Tyr) + L-tyrosine + ATP = L-tyrosyl-tRNA(Tyr) + AMP + diphosphate + H(+). Its function is as follows. Catalyzes the attachment of tyrosine to tRNA(Tyr) in a two-step reaction: tyrosine is first activated by ATP to form Tyr-AMP and then transferred to the acceptor end of tRNA(Tyr). In Wolbachia pipientis subsp. Culex pipiens (strain wPip), this protein is Tyrosine--tRNA ligase.